We begin with the raw amino-acid sequence, 535 residues long: Succinate-semialdehyde dehydrogenase, mitochondrial (535 aa).

A mitochondrion-targeting transit peptide spans 1-47 (MATCIWLRSCGARRLGSTFPGCRLRPRAGGLVPASGPAPGPAQLRCY). Lysine 126 bears the N6-acetyllysine; alternate mark. Position 126 is an N6-succinyllysine; alternate (lysine 126). Lysine 135 and lysine 184 each carry N6-succinyllysine. NAD(+) contacts are provided by residues arginine 213 and 228 to 231 (KPAE). Substrate is bound at residue arginine 213. Lysine 265 bears the N6-acetyllysine; alternate mark. An N6-succinyllysine; alternate modification is found at lysine 265. 284 to 289 (GSTTTG) contributes to the NAD(+) binding site. Catalysis depends on glutamate 306, which acts as the Proton acceptor. Residue arginine 334 coordinates substrate. Cysteine 340 (nucleophile) is an active-site residue. An intrachain disulfide couples cysteine 340 to cysteine 342. The residue at position 365 (lysine 365) is an N6-acetyllysine. At lysine 402 the chain carries N6-succinyllysine. Lysine 411 is modified (N6-acetyllysine). Serine 498 contributes to the substrate binding site. Residue serine 499 is modified to Phosphoserine.

This sequence belongs to the aldehyde dehydrogenase family. As to quaternary structure, homotetramer.

Its subcellular location is the mitochondrion. The catalysed reaction is succinate semialdehyde + NAD(+) + H2O = succinate + NADH + 2 H(+). It participates in amino-acid degradation; 4-aminobutanoate degradation. Redox-regulated. Inhibited under oxydizing conditions. Its function is as follows. Catalyzes one step in the degradation of the inhibitory neurotransmitter gamma-aminobutyric acid (GABA). The chain is Succinate-semialdehyde dehydrogenase, mitochondrial (ALDH5A1) from Pan troglodytes (Chimpanzee).